The sequence spans 404 residues: uncharacterized protein (404 aa).

This is an uncharacterized protein from Mycoplasma genitalium (strain ATCC 33530 / DSM 19775 / NCTC 10195 / G37) (Mycoplasmoides genitalium).